A 317-amino-acid polypeptide reads, in one-letter code: MALTELRIASRRSQLAMVQTNWVKAELEKAHPGLTITVEAMATQGDKILDVALAKIGDKGLFTKELEAQMLVGRADIAVHSLKDLPTNLPEGLMLGCITEREDPADALVLHAKNKHLNLATLPEGAVVGTSSLRRLAQLRHHYPHLEFKDVRGNVITRLEKLDSGAYDCLILAAAGLGRLGFADRIDQSIPGDISLHAVGQGALGIECVENQPDVMEIIKVLEHGPTSQRCLAERAFLRELEGGCQVPIGVNTRFEGDQLILTGMVASLDGKRLIREQASGPSTDPESIGLELAATLKGLGAGEILKEIFDAVRPEA.

C245 is modified (S-(dipyrrolylmethanemethyl)cysteine).

It belongs to the HMBS family. As to quaternary structure, monomer. Requires dipyrromethane as cofactor.

The enzyme catalyses 4 porphobilinogen + H2O = hydroxymethylbilane + 4 NH4(+). It participates in porphyrin-containing compound metabolism; protoporphyrin-IX biosynthesis; coproporphyrinogen-III from 5-aminolevulinate: step 2/4. It functions in the pathway porphyrin-containing compound metabolism; chlorophyll biosynthesis. Its function is as follows. Tetrapolymerization of the monopyrrole PBG into the hydroxymethylbilane pre-uroporphyrinogen in several discrete steps. The protein is Porphobilinogen deaminase of Synechococcus sp. (strain CC9902).